We begin with the raw amino-acid sequence, 697 residues long: MERNHWNEKSSGAKRSRERDLTLSTIRSILAADERLRIKASSYLGVGRGVDDEAVIDIFPTGQTMSFLRLLHGFLGTCRGQSMHQVLRDPCVLRKQLLYGVCKTLFDTITVRRVAEEWKLHAALFPYRALDEEDLEQYLLVWSASLRQSVQTGVLGALRDILYQYADNDDYGLYVDWCVTVGLVPLLDVKTKPSEAAERAQFVRAAVQRATETHPLAQDLLQANLALLLQVAERLGAVRIANAPEVRVFKKVRSERLEAQLRGKHIRLYVAAEPLAYERDKLLFTTPVAHLHEEILRYDGLCRHQKICQLLNTFPVKVVTASRHELNCKKLVEMMEQHDRGSDAKKSIMKFLLNVSDSKSRIGIEDSVESFLQDLTPSLVDQNRLLPARGPGGPGVVGPGGAVVGGPAGHVGLLPPPPGPAAPERDIRDLFKKQVIKCLEEQIQSQVDEIQDLRTLNQTWENRVRELRDLLTRYASRREDSMSLGARDAELYHLPVLEAVRKARDAAPFRPLAVEDNRLVANSFFSQFVPGTESLERFLTQLWENEYFRTFRLRRLVTHQGAEEAIVYSNYTVERVTLPYLCHILALGTLDPVPEAYLQLSFGEIVAAAYDDSKFCRYVELICSREKARRRQMSREAAGGVPERGTASSGGPGTLERSAPRRLITADEERRGPERVGRFRNGGPDDPRRAGGPYGFH.

Residues Met633–His697 are disordered. Basic and acidic residues predominate over residues Ile664 to Arg689.

It belongs to the herpesviridae portal protein family. Homododecamerizes. Interacts with terminase subunits TRM1 and TRM3.

It is found in the virion. The protein resides in the host nucleus. Its function is as follows. Forms a portal in the viral capsid through which viral DNA is translocated during DNA packaging. Assembles as a dodecamer at a single fivefold axe of the T=16 icosahedric capsid. Binds to the molecular motor that translocates the viral DNA, termed terminase. The chain is Portal protein (UL104) from Homo sapiens (Human).